A 406-amino-acid polypeptide reads, in one-letter code: NADH-quinone oxidoreductase subunit D (406 aa).

It belongs to the complex I 49 kDa subunit family. NDH-1 is composed of 14 different subunits. Subunits NuoB, C, D, E, F, and G constitute the peripheral sector of the complex.

It localises to the cell inner membrane. The catalysed reaction is a quinone + NADH + 5 H(+)(in) = a quinol + NAD(+) + 4 H(+)(out). Functionally, NDH-1 shuttles electrons from NADH, via FMN and iron-sulfur (Fe-S) centers, to quinones in the respiratory chain. The immediate electron acceptor for the enzyme in this species is believed to be ubiquinone. Couples the redox reaction to proton translocation (for every two electrons transferred, four hydrogen ions are translocated across the cytoplasmic membrane), and thus conserves the redox energy in a proton gradient. In Acidiphilium cryptum (strain JF-5), this protein is NADH-quinone oxidoreductase subunit D.